A 392-amino-acid chain; its full sequence is O-phospho-L-seryl-tRNA:Cys-tRNA synthase 2 (392 aa).

Pyridoxal 5'-phosphate contacts are provided by residues 85–86 (AR), asparagine 190, and 213–215 (SGH). Lysine 216 bears the N6-(pyridoxal phosphate)lysine mark.

Belongs to the SepCysS family. In terms of assembly, homodimer. Interacts with SepRS. It depends on pyridoxal 5'-phosphate as a cofactor.

The enzyme catalyses O-phospho-L-seryl-tRNA(Cys) + hydrogen sulfide + H(+) = L-cysteinyl-tRNA(Cys) + phosphate. Its function is as follows. Converts O-phospho-L-seryl-tRNA(Cys) (Sep-tRNA(Cys)) to L-cysteinyl-tRNA(Cys) (Cys-tRNA(Cys)). This chain is O-phospho-L-seryl-tRNA:Cys-tRNA synthase 2, found in Methanocorpusculum labreanum (strain ATCC 43576 / DSM 4855 / Z).